Here is a 596-residue protein sequence, read N- to C-terminus: Transketolase-like protein 1 (596 aa).

His-46 lines the substrate pocket. Residues Ser-49 and 94-96 (GWL) each bind thiamine diphosphate. Asp-126 is a binding site for Mg(2+). Gly-127 and Asn-156 together coordinate thiamine diphosphate. 2 residues coordinate Mg(2+): Asn-156 and Leu-158. Positions 218 and 232 each coordinate thiamine diphosphate. Substrate-binding residues include His-232, Arg-292, and Ser-319. Thiamine diphosphate contacts are provided by Glu-340 and Phe-366. Glu-340 (proton donor) is an active-site residue. The substrate site is built by His-390 and Asp-398. Residue Gln-402 participates in thiamine diphosphate binding. Arg-448 contacts substrate.

This sequence belongs to the transketolase family. As to quaternary structure, homodimer. Requires Mg(2+) as cofactor. The cofactor is Ca(2+). It depends on Mn(2+) as a cofactor. Co(2+) serves as cofactor. Thiamine diphosphate is required as a cofactor.

It localises to the cytoplasm. It catalyses the reaction D-sedoheptulose 7-phosphate + D-glyceraldehyde 3-phosphate = aldehydo-D-ribose 5-phosphate + D-xylulose 5-phosphate. Its function is as follows. Catalyzes the transfer of a two-carbon ketol group from a ketose donor to an aldose acceptor, via a covalent intermediate with the cofactor thiamine pyrophosphate. In Macaca fascicularis (Crab-eating macaque), this protein is Transketolase-like protein 1 (TKTL1).